The sequence spans 855 residues: DNA mismatch repair protein MutS (855 aa).

616 to 623 (GPNMGGKS) lines the ATP pocket.

It belongs to the DNA mismatch repair MutS family.

Its function is as follows. This protein is involved in the repair of mismatches in DNA. It is possible that it carries out the mismatch recognition step. This protein has a weak ATPase activity. This is DNA mismatch repair protein MutS from Escherichia coli O139:H28 (strain E24377A / ETEC).